We begin with the raw amino-acid sequence, 228 residues long: Small ribosomal subunit protein uS3 (228 aa).

The region spanning 39–107 (VRAYLQDKLK…PVHINIEEIR (69 aa)) is the KH type-2 domain.

The protein belongs to the universal ribosomal protein uS3 family. As to quaternary structure, part of the 30S ribosomal subunit. Forms a tight complex with proteins S10 and S14.

Its function is as follows. Binds the lower part of the 30S subunit head. Binds mRNA in the 70S ribosome, positioning it for translation. This Ectopseudomonas mendocina (strain ymp) (Pseudomonas mendocina) protein is Small ribosomal subunit protein uS3.